The primary structure comprises 412 residues: Proteasome-activating nucleotidase (412 aa).

The stretch at 15 to 72 (EDLYRYLLERVTNLEDRNTELREQLRQIEADKRYLETQKVRYEREVRKFKGEIEQMKS) forms a coiled coil. Residues 197-202 (GTGKTL) and histidine 336 each bind ATP. Positions 410–412 (MFA) are docks into pockets in the proteasome alpha-ring to cause gate opening.

The protein belongs to the AAA ATPase family. As to quaternary structure, homohexamer. The hexameric complex has a two-ring architecture resembling a top hat that caps the 20S proteasome core at one or both ends. Upon ATP-binding, the C-terminus of PAN interacts with the alpha-rings of the proteasome core by binding to the intersubunit pockets.

It localises to the cytoplasm. Its function is as follows. ATPase which is responsible for recognizing, binding, unfolding and translocation of substrate proteins into the archaeal 20S proteasome core particle. Is essential for opening the gate of the 20S proteasome via an interaction with its C-terminus, thereby allowing substrate entry and access to the site of proteolysis. Thus, the C-termini of the proteasomal ATPase function like a 'key in a lock' to induce gate opening and therefore regulate proteolysis. Unfolding activity requires energy from ATP hydrolysis, whereas ATP binding alone promotes ATPase-20S proteasome association which triggers gate opening, and supports translocation of unfolded substrates. In Methanosphaerula palustris (strain ATCC BAA-1556 / DSM 19958 / E1-9c), this protein is Proteasome-activating nucleotidase.